The primary structure comprises 85 residues: Small ribosomal subunit protein uS15c (85 aa).

This sequence belongs to the universal ribosomal protein uS15 family. Part of the 30S ribosomal subunit.

It is found in the plastid. The protein resides in the chloroplast. The protein is Small ribosomal subunit protein uS15c (rps15) of Chaetosphaeridium globosum (Charophycean green alga).